Consider the following 399-residue polypeptide: 4-hydroxy-3-methylbut-2-enyl diphosphate reductase (399 aa).

[4Fe-4S] cluster is bound at residue Cys66. His96 is a binding site for (2E)-4-hydroxy-3-methylbut-2-enyl diphosphate. His96 is a binding site for dimethylallyl diphosphate. Isopentenyl diphosphate is bound at residue His96. Residue Cys157 participates in [4Fe-4S] cluster binding. (2E)-4-hydroxy-3-methylbut-2-enyl diphosphate is bound at residue His185. His185 is a binding site for dimethylallyl diphosphate. An isopentenyl diphosphate-binding site is contributed by His185. Glu187 functions as the Proton donor in the catalytic mechanism. Thr250 is a binding site for (2E)-4-hydroxy-3-methylbut-2-enyl diphosphate. Cys288 serves as a coordination point for [4Fe-4S] cluster. (2E)-4-hydroxy-3-methylbut-2-enyl diphosphate contacts are provided by Ser317, Ser318, Asn319, and Ser380. Dimethylallyl diphosphate contacts are provided by Ser317, Ser318, Asn319, and Ser380. Positions 317, 318, 319, and 380 each coordinate isopentenyl diphosphate.

This sequence belongs to the IspH family. Requires [4Fe-4S] cluster as cofactor.

It carries out the reaction isopentenyl diphosphate + 2 oxidized [2Fe-2S]-[ferredoxin] + H2O = (2E)-4-hydroxy-3-methylbut-2-enyl diphosphate + 2 reduced [2Fe-2S]-[ferredoxin] + 2 H(+). The enzyme catalyses dimethylallyl diphosphate + 2 oxidized [2Fe-2S]-[ferredoxin] + H2O = (2E)-4-hydroxy-3-methylbut-2-enyl diphosphate + 2 reduced [2Fe-2S]-[ferredoxin] + 2 H(+). Its pathway is isoprenoid biosynthesis; dimethylallyl diphosphate biosynthesis; dimethylallyl diphosphate from (2E)-4-hydroxy-3-methylbutenyl diphosphate: step 1/1. It functions in the pathway isoprenoid biosynthesis; isopentenyl diphosphate biosynthesis via DXP pathway; isopentenyl diphosphate from 1-deoxy-D-xylulose 5-phosphate: step 6/6. In terms of biological role, catalyzes the conversion of 1-hydroxy-2-methyl-2-(E)-butenyl 4-diphosphate (HMBPP) into a mixture of isopentenyl diphosphate (IPP) and dimethylallyl diphosphate (DMAPP). Acts in the terminal step of the DOXP/MEP pathway for isoprenoid precursor biosynthesis. This chain is 4-hydroxy-3-methylbut-2-enyl diphosphate reductase, found in Synechococcus sp. (strain CC9605).